We begin with the raw amino-acid sequence, 208 residues long: FMN-dependent NADH:quinone oxidoreductase (208 aa).

Residues 17–19, 99–102, and 143–146 each bind FMN; these read SNS, MWNL, and SRGG.

The protein belongs to the azoreductase type 1 family. In terms of assembly, homodimer. It depends on FMN as a cofactor.

The enzyme catalyses 2 a quinone + NADH + H(+) = 2 a 1,4-benzosemiquinone + NAD(+). The catalysed reaction is N,N-dimethyl-1,4-phenylenediamine + anthranilate + 2 NAD(+) = 2-(4-dimethylaminophenyl)diazenylbenzoate + 2 NADH + 2 H(+). Functionally, quinone reductase that provides resistance to thiol-specific stress caused by electrophilic quinones. In terms of biological role, also exhibits azoreductase activity. Catalyzes the reductive cleavage of the azo bond in aromatic azo compounds to the corresponding amines. This is FMN-dependent NADH:quinone oxidoreductase from Staphylococcus haemolyticus (strain JCSC1435).